The following is a 206-amino-acid chain: Thymidylate kinase (206 aa).

An ATP-binding site is contributed by 11-18 (GIDGAGKT).

The protein belongs to the thymidylate kinase family.

The catalysed reaction is dTMP + ATP = dTDP + ADP. In terms of biological role, phosphorylation of dTMP to form dTDP in both de novo and salvage pathways of dTTP synthesis. This Burkholderia ambifaria (strain MC40-6) protein is Thymidylate kinase.